Here is a 246-residue protein sequence, read N- to C-terminus: MKYLVDTHAHTIASTHAYSTVHDYIAVAKQKGLKLFAITDHGPDMADAPHFWHFVNLRVLPRIVDGVGILRGIEANIKNDAGEIDYFGDYLQELDIVLAGFHEPVFPPSDKQTHTQALINAIESGNVDIITHPGNPAYPIDITAVAAAAARCHVALEINNSSFEMSRKGSEANCVAIAKAVRDAGGQLVMGSDSHVAFSLGEFSQALAIIEEAEFPEERLLNKSPEALLTFLSKRGHKTLDDFAEL.

Residues histidine 8, histidine 10, histidine 16, histidine 41, glutamate 74, histidine 102, histidine 132, aspartate 193, and histidine 195 each coordinate Zn(2+).

The protein belongs to the PHP family. Zn(2+) serves as cofactor.

This Shewanella sediminis (strain HAW-EB3) protein is Probable phosphatase Ssed_2939.